Reading from the N-terminus, the 317-residue chain is Putative HTH-type transcriptional regulatory protein Mlab_0160 (317 aa).

Residues 132–189 (LRTLREEQAMSLGDLAHALGVSRRTISKYEGGMGTTLEMAMRLEEFFNDDIVMPIDLL) form the HTH cro/C1-type domain. Positions 143 to 162 (LGDLAHALGVSRRTISKYEG) form a DNA-binding region, H-T-H motif. The tract at residues 199-219 (VPASLASGHNPESDAQPKRPE) is disordered. Residues 209–219 (PESDAQPKRPE) show a composition bias toward basic and acidic residues.

The protein is Putative HTH-type transcriptional regulatory protein Mlab_0160 of Methanocorpusculum labreanum (strain ATCC 43576 / DSM 4855 / Z).